The chain runs to 206 residues: Ras-related protein RABG3f (206 aa).

15-23 (GDSGVGKTS) provides a ligand contact to GTP. Positions 37–45 (YKATIGADF) match the Effector region motif. GTP-binding positions include 63–67 (DTAGQ), 125–128 (NKVD), and 158–159 (SA). S-geranylgeranyl cysteine attachment occurs at residues Cys-204 and Cys-206. Cys-206 carries the post-translational modification Cysteine methyl ester.

It belongs to the small GTPase superfamily. Rab family. Interacts with VPS35A.

Its subcellular location is the endosome membrane. It localises to the vacuole membrane. The protein localises to the prevacuolar compartment membrane. Regulated by guanine nucleotide exchange factors (GEFs) which promote the exchange of bound GDP for free GTP. Regulated by the MON1-CCZ1 complex which serves as a link between Rab5 and Rab7 protein families in PVCs and mediates PVC maturation. Functionally, essential for trafficking from prevacuolar compartments to vacuoles. Involved in the trafficking of newly synthesized protein to vacuoles. Essential for plant growth. Participates in the recruitment of the core retromer components to the endosomal membrane by interacting with VPS35A. In Arabidopsis thaliana (Mouse-ear cress), this protein is Ras-related protein RABG3f (RABG3F).